Reading from the N-terminus, the 315-residue chain is Homoserine kinase (315 aa).

97 to 107 (PPARGLGSSAT) contacts ATP.

Belongs to the GHMP kinase family. Homoserine kinase subfamily.

The protein localises to the cytoplasm. It carries out the reaction L-homoserine + ATP = O-phospho-L-homoserine + ADP + H(+). Its pathway is amino-acid biosynthesis; L-threonine biosynthesis; L-threonine from L-aspartate: step 4/5. Its function is as follows. Catalyzes the ATP-dependent phosphorylation of L-homoserine to L-homoserine phosphate. This is Homoserine kinase from Parasynechococcus marenigrum (strain WH8102).